Consider the following 43-residue polypeptide: SCAGSCKCKNCRCRSCRKSCCSCCPAGCNNCVKGCVCKEPASS.

Residues 1–16 (SCAGSCKCKNCRCRSC) are beta. A divalent metal cation is bound by residues cysteine 2, cysteine 6, cysteine 8, cysteine 11, cysteine 13, cysteine 16, cysteine 20, cysteine 21, cysteine 23, cysteine 24, cysteine 28, cysteine 31, cysteine 35, and cysteine 37. The alpha stretch occupies residues 17–43 (RKSCCSCCPAGCNNCVKGCVCKEPASS).

This sequence belongs to the metallothionein superfamily. Type 1 family.

Functionally, metallothioneins have a high content of cysteine residues that bind various heavy metals. In Colinus virginianus (Northern bobwhite), this protein is Metallothionein B.